A 154-amino-acid polypeptide reads, in one-letter code: UPF0547 protein C16orf87 homolog (154 aa).

The interval His46–Glu119 is disordered. The span at Val68 to Arg84 shows a compositional bias: basic and acidic residues. The residue at position 91 (Ser91) is a Phosphoserine. Positions Lys104 to Lys132 form a coiled coil. Over residues Lys109–Glu119 the composition is skewed to basic and acidic residues.

This sequence belongs to the UPF0547 family.

The sequence is that of UPF0547 protein C16orf87 homolog from Bos taurus (Bovine).